Consider the following 185-residue polypeptide: MSDLLVVPDAERVAATVVAGFRDVVDFPQPGVVFKDITPLLADARAFATVVEALAALARASGASAVAGIEARGFMLAAPAAERAGLGFWPVRKAGKLPAPVLRREYALEYGTAALELSAGTVGAGERVLVVDDVLATGGTARAACELLEEAGAQVVALAVLLELAPLGGRPRLGDRPVVALHTQT.

Belongs to the purine/pyrimidine phosphoribosyltransferase family. Homodimer.

It is found in the cytoplasm. It catalyses the reaction AMP + diphosphate = 5-phospho-alpha-D-ribose 1-diphosphate + adenine. It functions in the pathway purine metabolism; AMP biosynthesis via salvage pathway; AMP from adenine: step 1/1. Its function is as follows. Catalyzes a salvage reaction resulting in the formation of AMP, that is energically less costly than de novo synthesis. This is Adenine phosphoribosyltransferase from Kineococcus radiotolerans (strain ATCC BAA-149 / DSM 14245 / SRS30216).